The primary structure comprises 2581 residues: Chromodomain-helicase-DNA-binding protein 8 (2581 aa).

Disordered stretches follow at residues 22–114 (DDSF…QTST), 253–283 (VKGS…TQGE), 349–392 (QKIQ…SPGQ), 429–582 (ALSS…QVKR), and 596–615 (DEEE…PILP). Polar residues-rich tracts occupy residues 42–51 (SLDSLDQMNQ) and 94–114 (DYTT…QTST). Residues 255-267 (GSAPAGNPGATGP) show a composition bias toward low complexity. A compositionally biased stretch (pro residues) spans 355-370 (PQPPSSQPQPQQPPST). Phosphoserine is present on Ser-432. Composition is skewed to basic and acidic residues over residues 445–462 (GMEE…EKAN) and 493–516 (RPEE…EEKP). Residues Ser-553 and Ser-562 each carry the phosphoserine modification. The span at 572–582 (QKRRSNRQVKR) shows a compositional bias: basic residues. Lys-609 is covalently cross-linked (Glycyl lysine isopeptide (Lys-Gly) (interchain with G-Cter in SUMO)). Chromo domains follow at residues 642–709 (AIVD…AQMR) and 724–790 (VEVD…RVNR). In terms of domain architecture, Helicase ATP-binding spans 823–997 (LFNWYNRQNC…FSLLHFLEPS (175 aa)). Position 836 to 843 (836 to 843 (DEMGLGKT)) interacts with ATP. Residues 948–951 (DEAH) carry the DEAH box motif. The region spanning 1137 to 1288 (LIDKLLPKLK…KAVLQSMSGR (152 aa)) is the Helicase C-terminal domain. 2 positions are modified to phosphoserine: Ser-1420 and Ser-1424. Positions 1692–1712 (EDPEYKPLQGPPKDQDDEGDP) are disordered. The segment at 1789-2302 (IARREKQQRW…LVELEVECME (514 aa)) is interaction with FAM124B. A phosphoserine mark is found at Ser-1976 and Ser-1978. A disordered region spans residues 1991-2116 (SRTASPLPLR…TDQSRSKLYD (126 aa)). Position 1993 is a phosphothreonine (Thr-1993). Ser-1995 and Ser-2008 each carry phosphoserine. A compositionally biased stretch (polar residues) spans 2011–2021 (ETATQVPSLES). Lys-2025 is covalently cross-linked (Glycyl lysine isopeptide (Lys-Gly) (interchain with G-Cter in SUMO2)). The residue at position 2046 (Ser-2046) is a Phosphoserine. Thr-2051 carries the post-translational modification Phosphothreonine. Residues 2064–2073 (EDEDDSDSEL) show a composition bias toward acidic residues. 2 positions are modified to phosphoserine: Ser-2069 and Ser-2071. Residues 2076–2095 (SKLSPSSSSSSSSSSSSSST) show a composition bias toward low complexity. The segment covering 2103–2116 (EEKLTDQSRSKLYD) has biased composition (basic and acidic residues). Phosphoserine occurs at positions 2182, 2200, and 2202. A disordered region spans residues 2189–2229 (GILGPGNHLLDSPSLTPGEYGDSPVPTPRSSSAASMAEEEA). A Phosphothreonine modification is found at Thr-2204. Ser-2211 carries the phosphoserine modification. Residue Thr-2215 is modified to Phosphothreonine. The span at 2218-2229 (SSSAASMAEEEA) shows a compositional bias: low complexity. Position 2223 is a phosphoserine (Ser-2223). Residue Lys-2256 forms a Glycyl lysine isopeptide (Lys-Gly) (interchain with G-Cter in SUMO2) linkage. The segment at 2481-2581 (PSSPHVDSST…NSDSSEDADD (101 aa)) is disordered. The segment covering 2492–2510 (LHHHHHHPHPHHHHHHHPG) has biased composition (basic residues). Ser-2519 is subject to Phosphoserine. The span at 2519–2528 (SPVTTASGTT) shows a compositional bias: polar residues. Acidic residues predominate over residues 2536 to 2550 (PEEDDDEDEEDDDDL).

The protein belongs to the SNF2/RAD54 helicase family. CHD8 subfamily. Interacts with p53/TP53, histone H1, CTNNB1, CTCF and PIAS3. Component of some MLL1/MLL complex, at least composed of the core components KMT2A/MLL1, ASH2L, HCFC1/HCF1, WDR5 and RBBP5, as well as the facultative components BACC1, CHD8, E2F6, HSP70, INO80C, KANSL1, LAS1L, MAX, MCRS1, MGA, KAT8/MOF, PELP1, PHF20, PRP31, RING2, RUVB1/TIP49A, RUVB2/TIP49B, SENP3, TAF1, TAF4, TAF6, TAF7, TAF9 and TEX10. Interacts with CHD7. Interacts with FAM124B. Interacts with TLK2. Interacts with HNRNPL in an RNA-dependent manner. In terms of processing, sumoylated.

Its subcellular location is the nucleus. It catalyses the reaction ATP + H2O = ADP + phosphate + H(+). ATP-dependent chromatin-remodeling factor, it slides nucleosomes along DNA; nucleosome sliding requires ATP. Acts as a transcription repressor by remodeling chromatin structure and recruiting histone H1 to target genes. Suppresses p53/TP53-mediated apoptosis by recruiting histone H1 and preventing p53/TP53 transactivation activity. Acts as a negative regulator of Wnt signaling pathway by regulating beta-catenin (CTNNB1) activity. Negatively regulates CTNNB1-targeted gene expression by being recruited specifically to the promoter regions of several CTNNB1 responsive genes. Involved in both enhancer blocking and epigenetic remodeling at chromatin boundary via its interaction with CTCF. Acts as a suppressor of STAT3 activity by suppressing the LIF-induced STAT3 transcriptional activity. Also acts as a transcription activator via its interaction with ZNF143 by participating in efficient U6 RNA polymerase III transcription. Regulates alternative splicing of a core group of genes involved in neuronal differentiation, cell cycle and DNA repair. Enables H3K36me3-coupled transcription elongation and co-transcriptional RNA processing likely via interaction with HNRNPL. This is Chromodomain-helicase-DNA-binding protein 8 from Homo sapiens (Human).